The primary structure comprises 504 residues: Probable cytosol aminopeptidase (504 aa).

The Mn(2+) site is built by lysine 263 and aspartate 268. The active site involves lysine 275. Mn(2+) is bound by residues aspartate 286, aspartate 345, and glutamate 347. Arginine 349 is a catalytic residue.

The protein belongs to the peptidase M17 family. The cofactor is Mn(2+).

The protein resides in the cytoplasm. It carries out the reaction Release of an N-terminal amino acid, Xaa-|-Yaa-, in which Xaa is preferably Leu, but may be other amino acids including Pro although not Arg or Lys, and Yaa may be Pro. Amino acid amides and methyl esters are also readily hydrolyzed, but rates on arylamides are exceedingly low.. It catalyses the reaction Release of an N-terminal amino acid, preferentially leucine, but not glutamic or aspartic acids.. Its function is as follows. Presumably involved in the processing and regular turnover of intracellular proteins. Catalyzes the removal of unsubstituted N-terminal amino acids from various peptides. The sequence is that of Probable cytosol aminopeptidase from Sulfurihydrogenibium sp. (strain YO3AOP1).